A 354-amino-acid chain; its full sequence is Small ribosomal subunit biogenesis GTPase RsgA (354 aa).

A disordered region spans residues 1-46; sequence MSKKKPLSQGQLRRMRANHEKRLNRDSGDKNTPELQDSSLGPEQSG. Residues 17–32 are compositionally biased toward basic and acidic residues; it reads ANHEKRLNRDSGDKNT. Over residues 33–46 the composition is skewed to polar residues; sequence PELQDSSLGPEQSG. The CP-type G domain occupies 108–276; that stretch reads HSSLSRPDLY…LIDSPGVREF (169 aa). Residues 164 to 167 and 218 to 226 contribute to the GTP site; these read NKID and GQSGVGKSS. Zn(2+) contacts are provided by cysteine 300, cysteine 305, histidine 307, and cysteine 313.

This sequence belongs to the TRAFAC class YlqF/YawG GTPase family. RsgA subfamily. In terms of assembly, monomer. Associates with 30S ribosomal subunit, binds 16S rRNA. Requires Zn(2+) as cofactor.

The protein localises to the cytoplasm. Functionally, one of several proteins that assist in the late maturation steps of the functional core of the 30S ribosomal subunit. Helps release RbfA from mature subunits. May play a role in the assembly of ribosomal proteins into the subunit. Circularly permuted GTPase that catalyzes slow GTP hydrolysis, GTPase activity is stimulated by the 30S ribosomal subunit. This chain is Small ribosomal subunit biogenesis GTPase RsgA, found in Shewanella oneidensis (strain ATCC 700550 / JCM 31522 / CIP 106686 / LMG 19005 / NCIMB 14063 / MR-1).